Here is a 131-residue protein sequence, read N- to C-terminus: (R)-mandelonitrile lyase (131 aa).

The region spanning 42–104 (VTFEPGARTA…WHGAAPTTAM (63 aa)) is the Cupin type-2 domain. Mn(2+) is bound by residues histidine 53, histidine 55, glutamine 59, histidine 94, and histidine 96.

It belongs to the cupin domain-containing hydroxynitrile lyase family. The cofactor is Mn(2+).

The catalysed reaction is (R)-mandelonitrile = benzaldehyde + hydrogen cyanide. In terms of biological role, hydroxynitrile lyase which catalyzes mandelonitrile formation from benzaldehyde and hydrogen cyanide with high stereoselectivity in presence of manganese. This chain is (R)-mandelonitrile lyase, found in Granulicella tundricola (strain ATCC BAA-1859 / DSM 23138 / MP5ACTX9).